The following is a 528-amino-acid chain: ATP synthase F(1) complex catalytic subunit beta, mitochondrial (528 aa).

The N-terminal 46 residues, 1-46 (MLGLVGRVVAASASGALRGLSPSAPLPQAQLLLRAAPAALQPARDY), are a transit peptide targeting the mitochondrion. An O-linked (GlcNAc) serine glycan is attached at Ser-106. N6-acetyllysine; alternate is present on residues Lys-124 and Lys-161. Residues Lys-124 and Lys-161 each carry the N6-succinyllysine; alternate modification. N6-acetyllysine is present on Lys-198. Gly-209, Val-210, Gly-211, Lys-212, Thr-213, and Val-214 together coordinate ADP. Gly-209 is an ATP binding site. 5 residues coordinate phosphate: Gly-209, Val-210, Gly-211, Lys-212, and Thr-213. ATP-binding residues include Gly-211, Lys-212, Thr-213, and Val-214. Thr-213 contributes to the Mg(2+) binding site. Glu-238 serves as a coordination point for Mg(2+). Residue Arg-239 coordinates ATP. Residues Lys-259 and Lys-264 each carry the N6-acetyllysine; alternate modification. Lys-259 and Lys-264 each carry N6-succinyllysine; alternate. The residue at position 312 (Thr-312) is a Phosphothreonine. Residue Ser-415 is modified to Phosphoserine. Residue Lys-426 is modified to N6-acetyllysine. Ser-433 is subject to Phosphoserine. An N6-acetyllysine mark is found at Lys-480 and Lys-485. Residue Lys-522 is modified to N6-acetyllysine; alternate. At Lys-522 the chain carries N6-succinyllysine; alternate.

The protein belongs to the ATPase alpha/beta chains family. In terms of assembly, homotrimer. Component of the ATP synthase complex composed at least of ATP5F1A/subunit alpha, ATP5F1B/subunit beta, ATP5MC1/subunit c (homooctomer), MT-ATP6/subunit a, MT-ATP8/subunit 8, ATP5ME/subunit e, ATP5MF/subunit f, ATP5MG/subunit g, ATP5MK/subunit k, ATP5MJ/subunit j, ATP5F1C/subunit gamma, ATP5F1D/subunit delta, ATP5F1E/subunit epsilon, ATP5PF/subunit F6, ATP5PB/subunit b, ATP5PD/subunit d, ATP5PO/subunit OSCP. ATP synthase complex consists of a soluble F(1) head domain (subunits alpha(3) and beta(3)) - the catalytic core - and a membrane F(0) domain - the membrane proton channel (subunits c, a, 8, e, f, g, k and j). These two domains are linked by a central stalk (subunits gamma, delta, and epsilon) rotating inside the F1 region and a stationary peripheral stalk (subunits F6, b, d, and OSCP). Interacts with PPIF. Interacts with BCL2L1 isoform BCL-X(L); the interaction mediates the association of BCL2L1 isoform BCL-X(L) with the mitochondrial membrane F(1)F(0) ATP synthase and enhances neurons metabolic efficiency. Interacts with CLN5 and PPT1. Interacts with S100A1; this interaction increases F1-ATPase activity. Interacts with MTLN. Interacts with TTC5/STRAP; the interaction results in decreased mitochondrial ATP production.

The protein resides in the mitochondrion inner membrane. The enzyme catalyses ATP + H2O + 4 H(+)(in) = ADP + phosphate + 5 H(+)(out). Its function is as follows. Catalytic subunit beta, of the mitochondrial membrane ATP synthase complex (F(1)F(0) ATP synthase or Complex V) that produces ATP from ADP in the presence of a proton gradient across the membrane which is generated by electron transport complexes of the respiratory chain. ATP synthase complex consist of a soluble F(1) head domain - the catalytic core - and a membrane F(1) domain - the membrane proton channel. These two domains are linked by a central stalk rotating inside the F(1) region and a stationary peripheral stalk. During catalysis, ATP synthesis in the catalytic domain of F(1) is coupled via a rotary mechanism of the central stalk subunits to proton translocation. In vivo, can only synthesize ATP although its ATP hydrolase activity can be activated artificially in vitro. With the subunit alpha (ATP5F1A), forms the catalytic core in the F(1) domain. This Bos taurus (Bovine) protein is ATP synthase F(1) complex catalytic subunit beta, mitochondrial.